The primary structure comprises 177 residues: ATP synthase subunit delta (177 aa).

The protein belongs to the ATPase delta chain family. In terms of assembly, F-type ATPases have 2 components, F(1) - the catalytic core - and F(0) - the membrane proton channel. F(1) has five subunits: alpha(3), beta(3), gamma(1), delta(1), epsilon(1). F(0) has three main subunits: a(1), b(2) and c(10-14). The alpha and beta chains form an alternating ring which encloses part of the gamma chain. F(1) is attached to F(0) by a central stalk formed by the gamma and epsilon chains, while a peripheral stalk is formed by the delta and b chains.

It localises to the cell inner membrane. In terms of biological role, f(1)F(0) ATP synthase produces ATP from ADP in the presence of a proton or sodium gradient. F-type ATPases consist of two structural domains, F(1) containing the extramembraneous catalytic core and F(0) containing the membrane proton channel, linked together by a central stalk and a peripheral stalk. During catalysis, ATP synthesis in the catalytic domain of F(1) is coupled via a rotary mechanism of the central stalk subunits to proton translocation. This protein is part of the stalk that links CF(0) to CF(1). It either transmits conformational changes from CF(0) to CF(1) or is implicated in proton conduction. The sequence is that of ATP synthase subunit delta from Shewanella baltica (strain OS223).